Reading from the N-terminus, the 289-residue chain is tRNA-cytidine(32) 2-sulfurtransferase (289 aa).

The PP-loop motif motif lies at 49 to 54 (SGGKDS). [4Fe-4S] cluster is bound by residues Cys-124, Cys-127, and Cys-215.

It belongs to the TtcA family. In terms of assembly, homodimer. The cofactor is Mg(2+). It depends on [4Fe-4S] cluster as a cofactor.

Its subcellular location is the cytoplasm. It carries out the reaction cytidine(32) in tRNA + S-sulfanyl-L-cysteinyl-[cysteine desulfurase] + AH2 + ATP = 2-thiocytidine(32) in tRNA + L-cysteinyl-[cysteine desulfurase] + A + AMP + diphosphate + H(+). It participates in tRNA modification. In terms of biological role, catalyzes the ATP-dependent 2-thiolation of cytidine in position 32 of tRNA, to form 2-thiocytidine (s(2)C32). The sulfur atoms are provided by the cysteine/cysteine desulfurase (IscS) system. In Methylococcus capsulatus (strain ATCC 33009 / NCIMB 11132 / Bath), this protein is tRNA-cytidine(32) 2-sulfurtransferase.